The primary structure comprises 501 residues: ATP synthase subunit alpha (501 aa).

169-176 (GDRQTGKT) provides a ligand contact to ATP.

The protein belongs to the ATPase alpha/beta chains family. In terms of assembly, F-type ATPases have 2 components, CF(1) - the catalytic core - and CF(0) - the membrane proton channel. CF(1) has five subunits: alpha(3), beta(3), gamma(1), delta(1), epsilon(1). CF(0) has three main subunits: a(1), b(2) and c(9-12). The alpha and beta chains form an alternating ring which encloses part of the gamma chain. CF(1) is attached to CF(0) by a central stalk formed by the gamma and epsilon chains, while a peripheral stalk is formed by the delta and b chains.

It is found in the cell inner membrane. It carries out the reaction ATP + H2O + 4 H(+)(in) = ADP + phosphate + 5 H(+)(out). Functionally, produces ATP from ADP in the presence of a proton gradient across the membrane. The alpha chain is a regulatory subunit. This Campylobacter jejuni subsp. jejuni serotype O:23/36 (strain 81-176) protein is ATP synthase subunit alpha.